A 261-amino-acid polypeptide reads, in one-letter code: Cytochrome c oxidase subunit 3 (261 aa).

Topologically, residues 1 to 15 (MAHQAHAYHMVDPSP) are mitochondrial matrix. Residues 16-34 (WPLTGAIAALLMTSGLAIW) form a helical membrane-spanning segment. At 35–40 (FHFHST) the chain is on the mitochondrial intermembrane side. The helical transmembrane segment at 41–66 (TLMTLGLILLLLTMYQWWRDIIREGT) threads the bilayer. Over 67 to 72 (FQGHHT) the chain is Mitochondrial matrix. The helical transmembrane segment at 73-105 (PPVQKGLRYGMILFITSEVFFFLGFFWAFYHSS) threads the bilayer. At 106–128 (LAPTPELGGCWPPTGITPLDPFE) the chain is on the mitochondrial intermembrane side. A helical transmembrane segment spans residues 129-152 (VPLLNTAVLLASGVTVTWAHHSIM). Topologically, residues 153-155 (EGE) are mitochondrial matrix. The chain crosses the membrane as a helical span at residues 156–183 (RKQAIQSLALTILLGLYFTALQAMEYYE). The Mitochondrial intermembrane segment spans residues 184–190 (APFTIAD). A helical membrane pass occupies residues 191–223 (GVYGSTFFVATGFHGLHVIIGSTFLAVCLLRQI). Over 224-232 (QYHFTSEHH) the chain is Mitochondrial matrix. A helical membrane pass occupies residues 233–256 (FGFEAAAWYWHFVDVVWLFLYVSI). Residues 257–261 (YWWGS) lie on the Mitochondrial intermembrane side of the membrane.

The protein belongs to the cytochrome c oxidase subunit 3 family. Component of the cytochrome c oxidase (complex IV, CIV), a multisubunit enzyme composed of 14 subunits. The complex is composed of a catalytic core of 3 subunits MT-CO1, MT-CO2 and MT-CO3, encoded in the mitochondrial DNA, and 11 supernumerary subunits COX4I, COX5A, COX5B, COX6A, COX6B, COX6C, COX7A, COX7B, COX7C, COX8 and NDUFA4, which are encoded in the nuclear genome. The complex exists as a monomer or a dimer and forms supercomplexes (SCs) in the inner mitochondrial membrane with NADH-ubiquinone oxidoreductase (complex I, CI) and ubiquinol-cytochrome c oxidoreductase (cytochrome b-c1 complex, complex III, CIII), resulting in different assemblies (supercomplex SCI(1)III(2)IV(1) and megacomplex MCI(2)III(2)IV(2)).

Its subcellular location is the mitochondrion inner membrane. The enzyme catalyses 4 Fe(II)-[cytochrome c] + O2 + 8 H(+)(in) = 4 Fe(III)-[cytochrome c] + 2 H2O + 4 H(+)(out). In terms of biological role, component of the cytochrome c oxidase, the last enzyme in the mitochondrial electron transport chain which drives oxidative phosphorylation. The respiratory chain contains 3 multisubunit complexes succinate dehydrogenase (complex II, CII), ubiquinol-cytochrome c oxidoreductase (cytochrome b-c1 complex, complex III, CIII) and cytochrome c oxidase (complex IV, CIV), that cooperate to transfer electrons derived from NADH and succinate to molecular oxygen, creating an electrochemical gradient over the inner membrane that drives transmembrane transport and the ATP synthase. Cytochrome c oxidase is the component of the respiratory chain that catalyzes the reduction of oxygen to water. Electrons originating from reduced cytochrome c in the intermembrane space (IMS) are transferred via the dinuclear copper A center (CU(A)) of subunit 2 and heme A of subunit 1 to the active site in subunit 1, a binuclear center (BNC) formed by heme A3 and copper B (CU(B)). The BNC reduces molecular oxygen to 2 water molecules using 4 electrons from cytochrome c in the IMS and 4 protons from the mitochondrial matrix. This Cyprinus carpio (Common carp) protein is Cytochrome c oxidase subunit 3 (mt-co3).